A 130-amino-acid polypeptide reads, in one-letter code: Small ribosomal subunit protein uS9 (130 aa).

The protein belongs to the universal ribosomal protein uS9 family.

This is Small ribosomal subunit protein uS9 from Azotobacter vinelandii (strain DJ / ATCC BAA-1303).